We begin with the raw amino-acid sequence, 200 residues long: MAKVLVLYYSSYGHVETMAQHIAEGAKSVAGVEVTLKRVPETIPVDQARAIGVKVDQAAPVATVDELADYDAIIFGTPTRFGNMAGQMRTFLDQTGGLWMKGALVGKIGSVFASTGTQHGGQETTITSFHTTLLHHGMVIVGVPYACSGLVNMNEITGGTPYGATTLAGADGSRQPSANELDIARYQGKRVAELASKLAS.

The Flavodoxin-like domain maps to 4–191 (VLVLYYSSYG…DIARYQGKRV (188 aa)). Residues 10–15 (SSYGHV) and 79–81 (TRF) contribute to the FMN site. NAD(+) is bound at residue Y12. W99 provides a ligand contact to substrate. FMN contacts are provided by residues 114–120 (STGTQHG) and H135.

Belongs to the WrbA family. FMN is required as a cofactor.

The enzyme catalyses a quinone + NADH + H(+) = a quinol + NAD(+). It carries out the reaction a quinone + NADPH + H(+) = a quinol + NADP(+). The chain is NAD(P)H dehydrogenase (quinone) from Burkholderia lata (strain ATCC 17760 / DSM 23089 / LMG 22485 / NCIMB 9086 / R18194 / 383).